Consider the following 426-residue polypeptide: L-ascorbate peroxidase T, chloroplastic (426 aa).

Histidine 112 acts as the Proton acceptor in catalysis. Histidine 241 serves as a coordination point for heme b. A K(+)-binding site is contributed by threonine 242. The segment at 245-269 is disordered; the sequence is RARPDRSGWGKPETKYTKTGPGEAG. Basic and acidic residues predominate over residues 246–260; the sequence is ARPDRSGWGKPETKY. K(+) is bound by residues threonine 274 and aspartate 281. Residues 397–417 form a helical membrane-spanning segment; sequence YFLNIIIAIGVLVLLSTLFGG.

This sequence belongs to the peroxidase family. Ascorbate peroxidase subfamily. It depends on heme b as a cofactor.

The protein resides in the plastid. It localises to the chloroplast thylakoid membrane. It carries out the reaction L-ascorbate + H2O2 = L-dehydroascorbate + 2 H2O. In terms of biological role, plays a key role in hydrogen peroxide removal. The protein is L-ascorbate peroxidase T, chloroplastic (APXT) of Arabidopsis thaliana (Mouse-ear cress).